Here is a 328-residue protein sequence, read N- to C-terminus: uncharacterized protein (328 aa).

The SIS domain maps to 37–179 (LTEKLLCHQG…AMTLLRCRKI (143 aa)). ATP is bound at residue 52 to 57 (GIGKSG). CBS domains are found at residues 207–264 (PRTE…GGDI) and 273–328 (MTRN…AGLL).

The protein belongs to the SIS family. GutQ/KpsF subfamily.

This is an uncharacterized protein from Chlamydia trachomatis serovar D (strain ATCC VR-885 / DSM 19411 / UW-3/Cx).